The chain runs to 376 residues: DNA replication and repair protein RecF (376 aa).

ATP is bound at residue 35–42 (GDNGSGKT).

It belongs to the RecF family.

Its subcellular location is the cytoplasm. Its function is as follows. The RecF protein is involved in DNA metabolism; it is required for DNA replication and normal SOS inducibility. RecF binds preferentially to single-stranded, linear DNA. It also seems to bind ATP. The polypeptide is DNA replication and repair protein RecF (Agrobacterium fabrum (strain C58 / ATCC 33970) (Agrobacterium tumefaciens (strain C58))).